We begin with the raw amino-acid sequence, 399 residues long: Serine/threonine-protein kinase PknL (399 aa).

The Cytoplasmic segment spans residues Met-1–Arg-368. The Protein kinase domain maps to Tyr-19–Ile-278. ATP is bound by residues Ile-25–Val-33 and Lys-48. The Proton acceptor role is filled by Asp-142. Positions Gly-312–Pro-346 are disordered. A helical transmembrane segment spans residues Met-369–Trp-389. At Thr-390–Leu-399 the chain is on the extracellular side.

This sequence belongs to the protein kinase superfamily. Ser/Thr protein kinase family. Post-translationally, autophosphorylated.

The protein resides in the cell membrane. The enzyme catalyses L-seryl-[protein] + ATP = O-phospho-L-seryl-[protein] + ADP + H(+). It carries out the reaction L-threonyl-[protein] + ATP = O-phospho-L-threonyl-[protein] + ADP + H(+). This is Serine/threonine-protein kinase PknL (pknL) from Mycobacterium bovis (strain ATCC BAA-935 / AF2122/97).